The sequence spans 150 residues: Regulatory protein RecX (150 aa).

This sequence belongs to the RecX family.

It localises to the cytoplasm. Functionally, modulates RecA activity. This Acidithiobacillus ferrooxidans (strain ATCC 23270 / DSM 14882 / CIP 104768 / NCIMB 8455) (Ferrobacillus ferrooxidans (strain ATCC 23270)) protein is Regulatory protein RecX.